We begin with the raw amino-acid sequence, 382 residues long: Type 2 DNA topoisomerase 6 subunit A (382 aa).

The Topo IIA-type catalytic domain maps to 14–155; it reads YDPQKVLKKL…MHITADRRGY (142 aa). Residue tyrosine 108 is the O-(5'-phospho-DNA)-tyrosine intermediate of the active site. Mg(2+) contacts are provided by glutamate 202 and aspartate 254.

Belongs to the TOP6A family. In terms of assembly, homodimer. Heterotetramer of two Top6A and two Top6B chains. Mg(2+) serves as cofactor.

The catalysed reaction is ATP-dependent breakage, passage and rejoining of double-stranded DNA.. Functionally, relaxes both positive and negative superturns and exhibits a strong decatenase activity. This chain is Type 2 DNA topoisomerase 6 subunit A, found in Pyrococcus horikoshii (strain ATCC 700860 / DSM 12428 / JCM 9974 / NBRC 100139 / OT-3).